The sequence spans 186 residues: MTSPFKVVAVSGGTYRPSRTLVLTQALIAELGQSLPIDSRVIELTDIAAPLGATLARNQAPAELQAVLDEIESADLLLVASPVYRGSYPGLLKHLFDLIDLNALIDTPVLLAATGGTERHALVLDHQLRPLFSFFQAITLPIGVYASEADFDNYRIVSEPLKARIRLAAERAAPLFGGRSELLKIA.

Belongs to the SsuE family.

The catalysed reaction is FMNH2 + NADP(+) = FMN + NADPH + 2 H(+). This Pseudomonas aeruginosa (strain ATCC 15692 / DSM 22644 / CIP 104116 / JCM 14847 / LMG 12228 / 1C / PRS 101 / PAO1) protein is FMN reductase (NADPH) (msuE).